Consider the following 505-residue polypeptide: Cytochrome P450 52C1 (505 aa).

A helical membrane pass occupies residues 4–21 (LFCFLAGIIVVYKAAQYY). Residue Cys453 participates in heme binding.

The protein belongs to the cytochrome P450 family. The cofactor is heme.

It is found in the membrane. In terms of biological role, together with an NADPH cytochrome P450 the enzyme system catalyzes the terminal hydroxylation as the first step in the assimilation of alkanes and fatty acids. This is Cytochrome P450 52C1 (CYP52C1) from Candida tropicalis (Yeast).